The following is a 295-amino-acid chain: Transcription factor bHLH19 (295 aa).

The 50-residue stretch at 115 to 164 (VLAKEHVLAERKRREKLSEKFIALSALLPGLKKADKVTILDDAISRMKQL) folds into the bHLH domain.

In terms of assembly, homodimer. Expressed in roots and leaves.

It localises to the nucleus. In Arabidopsis thaliana (Mouse-ear cress), this protein is Transcription factor bHLH19 (BHLH19).